Here is a 241-residue protein sequence, read N- to C-terminus: Small ribosomal subunit protein uS2 (241 aa).

The protein belongs to the universal ribosomal protein uS2 family.

The chain is Small ribosomal subunit protein uS2 from Enterobacter sp. (strain 638).